Consider the following 229-residue polypeptide: General odorant-binding protein 69 (229 aa).

A signal peptide spans 1 to 20 (MDRLLLVLLSSASLLLTVYG). An intrachain disulfide couples Cys66 to Cys106.

Belongs to the PBP/GOBP family.

The protein localises to the secreted. Present in the aqueous fluid surrounding olfactory sensory dendrites and are thought to aid in the capture and transport of hydrophobic odorants into and through this fluid. This is General odorant-binding protein 69 (Obp69) from Anopheles gambiae (African malaria mosquito).